We begin with the raw amino-acid sequence, 371 residues long: uncharacterized protein (371 aa).

The region spanning 20 to 250 (VTIRNVTKRY…PANIFVAGFI (231 aa)) is the ABC transporter domain. An ATP-binding site is contributed by 52–59 (GPSGCGKS).

Belongs to the ABC transporter superfamily.

The protein localises to the cell inner membrane. Its function is as follows. Probably part of a binding-protein-dependent transport system y4oPQRS. This system probably transports a sugar-like molecule. Probably responsible for energy coupling to the transport system. This is an uncharacterized protein from Sinorhizobium fredii (strain NBRC 101917 / NGR234).